The sequence spans 106 residues: Nucleoid-associated protein Rpal_0620 (106 aa).

This sequence belongs to the YbaB/EbfC family. As to quaternary structure, homodimer.

It localises to the cytoplasm. The protein resides in the nucleoid. Its function is as follows. Binds to DNA and alters its conformation. May be involved in regulation of gene expression, nucleoid organization and DNA protection. The polypeptide is Nucleoid-associated protein Rpal_0620 (Rhodopseudomonas palustris (strain TIE-1)).